Consider the following 225-residue polypeptide: uncharacterized protein (225 aa).

Residues 114 to 219 (DAEAIIMQVY…RLSVTMRRII (106 aa)) enclose the Fe2OG dioxygenase domain.

Belongs to the iron/ascorbate-dependent oxidoreductase family.

The protein localises to the cytoplasm. Its subcellular location is the nucleus. This is an uncharacterized protein from Schizosaccharomyces pombe (strain 972 / ATCC 24843) (Fission yeast).